The chain runs to 527 residues: DNA damage-binding protein cmr1 (527 aa).

The segment at 35–90 (AGLFPPKSARSSPGGLTKPKKKPAPKKVKKEDEDLVPRRMSSRLRGLAADSEVAKR) is disordered. Residues 52 to 62 (KPKKKPAPKKV) are compositionally biased toward basic residues. 7 WD repeats span residues 185 to 226 (LTPE…PISA), 249 to 289 (PHTR…SVEK), 296 to 336 (SDDI…RSAV), 341 to 381 (LSEK…HDEP), 388 to 427 (VSRL…AAWK), 450 to 493 (GRWV…LAQL), and 496 to 527 (DGIT…CLWM). A disordered region spans residues 284 to 303 (TTSVEKYAPESTSDDIPISG).

The protein belongs to the WD repeat DDB2/WDR76 family.

Functionally, DNA-binding protein that binds to both single- and double-stranded DNA. Binds preferentially to UV-damaged DNA. May be involved in DNA-metabolic processes. The sequence is that of DNA damage-binding protein cmr1 from Neosartorya fischeri (strain ATCC 1020 / DSM 3700 / CBS 544.65 / FGSC A1164 / JCM 1740 / NRRL 181 / WB 181) (Aspergillus fischerianus).